The primary structure comprises 178 residues: Protein GrpE (178 aa).

A disordered region spans residues 1–26 (MQDQDKYAEQAASMEEPASADAPAIV).

It belongs to the GrpE family. As to quaternary structure, homodimer.

The protein localises to the cytoplasm. Its function is as follows. Participates actively in the response to hyperosmotic and heat shock by preventing the aggregation of stress-denatured proteins, in association with DnaK and GrpE. It is the nucleotide exchange factor for DnaK and may function as a thermosensor. Unfolded proteins bind initially to DnaJ; upon interaction with the DnaJ-bound protein, DnaK hydrolyzes its bound ATP, resulting in the formation of a stable complex. GrpE releases ADP from DnaK; ATP binding to DnaK triggers the release of the substrate protein, thus completing the reaction cycle. Several rounds of ATP-dependent interactions between DnaJ, DnaK and GrpE are required for fully efficient folding. The chain is Protein GrpE from Herminiimonas arsenicoxydans.